The chain runs to 533 residues: tRNA(Ile)-lysidine synthase (533 aa).

Residue 27-32 (SGGSDS) coordinates ATP.

Belongs to the tRNA(Ile)-lysidine synthase family.

It is found in the cytoplasm. It catalyses the reaction cytidine(34) in tRNA(Ile2) + L-lysine + ATP = lysidine(34) in tRNA(Ile2) + AMP + diphosphate + H(+). Its function is as follows. Ligates lysine onto the cytidine present at position 34 of the AUA codon-specific tRNA(Ile) that contains the anticodon CAU, in an ATP-dependent manner. Cytidine is converted to lysidine, thus changing the amino acid specificity of the tRNA from methionine to isoleucine. This chain is tRNA(Ile)-lysidine synthase, found in Rickettsia peacockii (strain Rustic).